A 71-amino-acid chain; its full sequence is Small ribosomal subunit protein bS21 (71 aa).

The span at 50–59 (AAAVKRHAKK) shows a compositional bias: basic residues. The tract at residues 50–71 (AAAVKRHAKKVQREQRRAVRLY) is disordered. The span at 60–71 (VQREQRRAVRLY) shows a compositional bias: basic and acidic residues.

Belongs to the bacterial ribosomal protein bS21 family.

In Pseudomonas entomophila (strain L48), this protein is Small ribosomal subunit protein bS21.